Reading from the N-terminus, the 681-residue chain is Propionyl-CoA carboxylase alpha chain (681 aa).

Positions 1-466 (MFNKILIANR…TTAFIAEEYP (466 aa)) constitute a Biotin carboxylation domain. ATP contacts are provided by residues Lys116, 148–209 (SNQI…PRHI), Glu200, and Asn235. Positions 120–317 (KKIAQEANVS…LVEQMIRVAA (198 aa)) constitute an ATP-grasp domain. Mg(2+) contacts are provided by Glu275, Glu288, and Asn290. Mn(2+)-binding residues include Glu275, Glu288, and Asn290. Glu288 is an active-site residue. Residue Phe348 participates in biotin binding. The region spanning 602–681 (LMPEKLPPDT…AVDDVIMEFE (80 aa)) is the Biotinyl-binding domain. Lys647 bears the N6-biotinyllysine mark.

The holoenzyme is a dodecamer composed of 6 PccA/alpha subunits and 6 PccB/beta subunits. Mg(2+) is required as a cofactor. It depends on Mn(2+) as a cofactor. Biotin serves as cofactor. The biotin cofactor is covalently attached to the C-terminal biotinyl-binding domain and is required for the catalytic activity.

The catalysed reaction is propanoyl-CoA + hydrogencarbonate + ATP = (S)-methylmalonyl-CoA + ADP + phosphate + H(+). It participates in metabolic intermediate metabolism; propanoyl-CoA degradation; succinyl-CoA from propanoyl-CoA: step 1/3. Functionally, this is one of the 2 subunits of the biotin-dependent propionyl-CoA carboxylase (PCC), the enzyme catalyzing the carboxylation of propionyl-CoA/propanoyl-CoA to D-methylmalonyl-CoA/(S)-methylmalonyl-CoA. Within the holoenzyme, the alpha subunit catalyzes the ATP-dependent carboxylation of the biotin carried by the biotin carboxyl carrier (BCC) domain, while the beta subunit then tranfers the carboxyl group from carboxylated biotin to propionyl-CoA. The sequence is that of Propionyl-CoA carboxylase alpha chain from Ruegeria pomeroyi (strain ATCC 700808 / DSM 15171 / DSS-3) (Silicibacter pomeroyi).